The following is a 218-amino-acid chain: Uracil-DNA glycosylase (218 aa).

The active-site Proton acceptor is Asp68.

The protein belongs to the uracil-DNA glycosylase (UDG) superfamily. UNG family. Homodimer. Interacts with protein OPG148. Component of the Uracil-DNA glycosylase(UDG)-OPG148-polymerase complex; OPG148 and UDG form a heterodimeric processivity factor that associates with OPG71 to form the processive polymerase holoenzyme.

The catalysed reaction is Hydrolyzes single-stranded DNA or mismatched double-stranded DNA and polynucleotides, releasing free uracil.. Plays an essential role in viral replication as a component of the DNA polymerase processivity factor. Excises uracil residues from the DNA which can arise as a result of misincorporation of dUMP residues by DNA polymerase or due to deamination of cytosine. The sequence is that of Uracil-DNA glycosylase (OPG116) from Vaccinia virus (strain Ankara) (VACV).